The following is an 822-amino-acid chain: Ras GTPase-activating-like protein rgaA (822 aa).

The interval 1 to 36 is disordered; it reads MNKEEYSDISDSESEEVHETNNHNEHEHEEEDDTPE. The segment covering 15 to 27 has biased composition (basic and acidic residues); sequence EEVHETNNHNEHE. A coiled-coil region spans residues 104 to 152; the sequence is EDKESDWIAEIQELKRNLVSEVRRNHTLERDLNRLDKRIALLIKNRGNI. The required for interaction to rac1A stretch occupies residues 161–822; sequence GLKAPKHKGD…IHLLNKLFLY (662 aa). A Ras-GAP domain is found at 234–477; that stretch reads FLLLSLYRLS…GDIKNYLQEI (244 aa).

As to quaternary structure, heterotetramer. Quaternary complex with activated rac1A, ctxA and ctxB. Interacts directly with rac1A and ctxA. Preferentially interacts with activated forms of rac1A, rac1B and rac1C. Interacts with racE.

The protein resides in the cytoplasm. It localises to the cell cortex. It is found in the cleavage furrow. Its function is as follows. Part of signaling pathway that is required for completion of cytokinesis. gapA and rgaA control cortexillin localization to the cleavage furrow and hence may be involved in cleavage of the midbody in the final stage of cytokinesis by regulating the actin cytoskeleton. Forms a complex by linking activated rac1A to ctxA. Assembly of this complex is necessary for the recruitment of cortexillin to the midzone of a dividing cell. Overexpression leads to the suppression of the formation of cellular projections containing F-actin and to a defect in cytokinesis. This chain is Ras GTPase-activating-like protein rgaA (rgaA), found in Dictyostelium discoideum (Social amoeba).